Reading from the N-terminus, the 131-residue chain is MSWQAYVDDHLMCEIEGNHLSAAAIIGHNGSVWAQSATFPQLKPEEVTGIMNDFNEPGSLAPTGLYLGGTKYMVIQGEPGVVIRGKKGPGGVTVKKSTMALLIGIYDEPMTPGQCNMVVERLGDYLIEQGL.

Belongs to the profilin family. In terms of assembly, occurs in many kinds of cells as a complex with monomeric actin in a 1:1 ratio.

Its subcellular location is the cytoplasm. It localises to the cytoskeleton. Binds to actin and affects the structure of the cytoskeleton. At high concentrations, profilin prevents the polymerization of actin, whereas it enhances it at low concentrations. By binding to PIP2, it inhibits the formation of IP3 and DG. This is Profilin-2 from Malus domestica (Apple).